The sequence spans 61 residues: [Thr6, Val10, Asp11]-phyllokinin (61 aa).

The first 22 residues, 1-22, serve as a signal peptide directing secretion; it reads MSFLKKSLFLVLFLGLVSFSIC. Positions 23–50 are excised as a propeptide; that stretch reads EEEKRETEEEENEDEMNEESEEKRESPE. The interval 24-61 is disordered; the sequence is EEKRETEEEENEDEMNEESEEKRESPERPPGFTPFRVD. Over residues 30–42 the composition is skewed to acidic residues; the sequence is EEEENEDEMNEES.

The protein belongs to the frog skin active peptide (FSAP) family. Bradykinin-related peptide subfamily. Expressed by the skin glands.

It localises to the secreted. In terms of biological role, induces relaxation of rat smooth muscle from tail artery and contraction of that from ileum, urinary bladder and uterus. Binds to both bradykinin receptor B1 (BDKRB1) and B2 (BDKRB2). This chain is [Thr6, Val10, Asp11]-phyllokinin, found in Agalychnis spurrelli (Gliding leaf frog).